Consider the following 362-residue polypeptide: UDP-arabinopyranose mutase 3 (362 aa).

The DXD motif signature appears at 106–108 (DDD). A glycan (N-linked (Glc...) arginine) is linked at R154.

It belongs to the RGP family. In terms of assembly, heterodimer with RGP1. The cofactor is Mn(2+). Mg(2+) serves as cofactor. Reversibly glycosylated in vitro by UDP-glucose, UDP-xylose and UDP-galactose, but not UDP-mannose. In terms of tissue distribution, specifically expressed in developing seeds.

Its subcellular location is the cytoplasm. The protein localises to the cytosol. It localises to the golgi apparatus. The enzyme catalyses UDP-beta-L-arabinofuranose = UDP-beta-L-arabinopyranose. In terms of biological role, UDP-L-arabinose mutase involved in the biosynthesis of cell wall non-cellulosic polysaccharides. Catalyzes the interconvertion of UDP-L-arabinopyranose (UDP-Arap) and UDP-L-arabinofuranose (UDP-Araf). Preferentially catalyzes the formation of UDP-Arap from UDP-Araf. At thermodynamic equilibrium in vitro the ratio of the pyranose form over the furanose form is 95:5. Is not active on other UDP-sugars (UDP-Gal, UDP-Xyl, UDP-Glc, GDP-Man and GDP-Fuc). Is probably active as heteromer in vivo. The protein is UDP-arabinopyranose mutase 3 of Arabidopsis thaliana (Mouse-ear cress).